Here is a 211-residue protein sequence, read N- to C-terminus: Dephospho-CoA kinase (211 aa).

Residues 7–211 (LIGVIGRSGA…ILTRRGVLGE (205 aa)) enclose the DPCK domain. Residue 15 to 20 (GAGKNV) participates in ATP binding.

The protein belongs to the CoaE family.

The protein resides in the cytoplasm. It carries out the reaction 3'-dephospho-CoA + ATP = ADP + CoA + H(+). The protein operates within cofactor biosynthesis; coenzyme A biosynthesis; CoA from (R)-pantothenate: step 5/5. In terms of biological role, catalyzes the phosphorylation of the 3'-hydroxyl group of dephosphocoenzyme A to form coenzyme A. The protein is Dephospho-CoA kinase of Treponema pallidum (strain Nichols).